The following is a 193-amino-acid chain: MNAKTLDAIKPFLDWIPLIVFFYIYKTTEGEGSEHIIAATTGLLIATLIVYGLMFVLQKFTLEKRQWLVVVLTVVFGGLTMAFQDDFYIRLKAPIINAVFAFGLAMSPLFLGGTPGIQKMLGPIFEMTPKQWMKLNWVWVGFFTLMAVLQALFAFVWVEYWAMFTAFGDMIVMVVFMVAQFWFLRGFMRKDIK.

The next 6 helical transmembrane spans lie at 5–25 (TLDA…FYIY), 36–56 (IIAA…LMFV), 67–87 (WLVV…QDDF), 93–113 (APII…FLGG), 138–158 (VWVG…FVWV), and 164–184 (FTAF…FWFL).

Belongs to the YciB family.

The protein localises to the cell inner membrane. Functionally, plays a role in cell envelope biogenesis, maintenance of cell envelope integrity and membrane homeostasis. In Vitreoscilla sp. (strain C1), this protein is Inner membrane-spanning protein YciB.